We begin with the raw amino-acid sequence, 309 residues long: Porphobilinogen deaminase (309 aa).

C244 bears the S-(dipyrrolylmethanemethyl)cysteine mark.

Belongs to the HMBS family. In terms of assembly, monomer. Requires dipyrromethane as cofactor.

The enzyme catalyses 4 porphobilinogen + H2O = hydroxymethylbilane + 4 NH4(+). The protein operates within porphyrin-containing compound metabolism; protoporphyrin-IX biosynthesis; coproporphyrinogen-III from 5-aminolevulinate: step 2/4. In terms of biological role, tetrapolymerization of the monopyrrole PBG into the hydroxymethylbilane pre-uroporphyrinogen in several discrete steps. The sequence is that of Porphobilinogen deaminase from Listeria welshimeri serovar 6b (strain ATCC 35897 / DSM 20650 / CCUG 15529 / CIP 8149 / NCTC 11857 / SLCC 5334 / V8).